The following is a 305-amino-acid chain: MPELPEVETVRRTLCPRVVGRRIRRVEILTPRQIYHPDPATFAADLEGAVFDDIERRGKYLLFRLGPRILVAHLRMSGHLYVCGPEAPRPRHLHVVFHLDDGGELRYADQRKFGGFHLLGPGGEGMPPGLANLGPEPLSPEFTPQVLAERLAGRHTSIKAALLNQALVAGLGNIYADEALFCARIHPAREAGSLTPAEVERLHGCIRRVLLRAVERRGTTFSLYRDGEGNEGDMYDELQVFDRAGEPCPVCGTPIRKVAVAQRGTHFCPRCQPVPEGVALSPRRARPGRRGNSVRVAAEPPGTYE.

The Schiff-base intermediate with DNA role is filled by Pro2. Glu3 serves as the catalytic Proton donor. Residue Lys59 is the Proton donor; for beta-elimination activity of the active site. DNA-binding residues include His92, Arg111, and Arg154. An FPG-type zinc finger spans residues 239 to 273 (QVFDRAGEPCPVCGTPIRKVAVAQRGTHFCPRCQP). Catalysis depends on Arg263, which acts as the Proton donor; for delta-elimination activity. Residues 282–305 (PRRARPGRRGNSVRVAAEPPGTYE) are disordered.

This sequence belongs to the FPG family. Monomer. Requires Zn(2+) as cofactor.

The catalysed reaction is Hydrolysis of DNA containing ring-opened 7-methylguanine residues, releasing 2,6-diamino-4-hydroxy-5-(N-methyl)formamidopyrimidine.. The enzyme catalyses 2'-deoxyribonucleotide-(2'-deoxyribose 5'-phosphate)-2'-deoxyribonucleotide-DNA = a 3'-end 2'-deoxyribonucleotide-(2,3-dehydro-2,3-deoxyribose 5'-phosphate)-DNA + a 5'-end 5'-phospho-2'-deoxyribonucleoside-DNA + H(+). Involved in base excision repair of DNA damaged by oxidation or by mutagenic agents. Acts as a DNA glycosylase that recognizes and removes damaged bases. Has a preference for oxidized purines, such as 7,8-dihydro-8-oxoguanine (8-oxoG). Has AP (apurinic/apyrimidinic) lyase activity and introduces nicks in the DNA strand. Cleaves the DNA backbone by beta-delta elimination to generate a single-strand break at the site of the removed base with both 3'- and 5'-phosphates. The sequence is that of Formamidopyrimidine-DNA glycosylase from Symbiobacterium thermophilum (strain DSM 24528 / JCM 14929 / IAM 14863 / T).